A 24-amino-acid polypeptide reads, in one-letter code: MLVLYRKRFSGFRFYFLSIFKYII.

This is an uncharacterized protein from Saccharomyces cerevisiae (strain ATCC 204508 / S288c) (Baker's yeast).